The sequence spans 117 residues: cAMP-regulated phosphoprotein 19-B (117 aa).

Residues 1-37 are compositionally biased toward basic and acidic residues; the sequence is MSRDNQEIKAPEESSAEEQKEMDDKVTSPEKAEEIKL. The tract at residues 1-54 is disordered; sequence MSRDNQEIKAPEESSAEEQKEMDDKVTSPEKAEEIKLKSRYPNIGPKPGGSDFL. Phosphoserine; by CDK2 is present on Ser28. A Phosphoserine; by GWL modification is found at Ser67. The disordered stretch occupies residues 77 to 117; it reads MKNKQLPTAAPDKTEVTGDHIPTPQDLPQRKPSLVASKLAG. Position 99 is a phosphothreonine; by CDK2 (Thr99). Position 109 is a phosphoserine; by PKA (Ser109).

This sequence belongs to the endosulfine family. In terms of assembly, interacts (when phosphorylated at Ser-67) with ppp2r2d. In terms of processing, phosphorylation at Ser-67 by gwl during mitosis is essential for interaction with ppp2r2d (PR55-delta) and subsequent inactivation of PP2A.

It is found in the cytoplasm. In terms of biological role, protein phosphatase inhibitor that specifically inhibits protein phosphatase 2A (PP2A) during mitosis. When phosphorylated at Ser-67 during mitosis, specifically interacts with ppp2r2d (PR55-delta) and inhibits its activity, leading to inactivation of PP2A, an essential condition to keep cyclin-B1-CDK1 activity high during M phase. The chain is cAMP-regulated phosphoprotein 19-B (arpp19-b) from Xenopus laevis (African clawed frog).